A 314-amino-acid chain; its full sequence is Olfactory receptor 5G9 (314 aa).

At 1 to 25 the chain is on the extracellular side; sequence MADENYTRITEFIFIGLRYHPNLQV. Asn5 carries N-linked (GlcNAc...) asparagine glycosylation. A helical transmembrane segment spans residues 26–46; the sequence is FLFLLFLLFYLVTMTGNLGMI. At 47-54 the chain is on the cytoplasmic side; sequence ILIRVDSR. The chain crosses the membrane as a helical span at residues 55-75; it reads LHTPMYFFLSHLSFVDICFSS. Residues 76–99 lie on the Extracellular side of the membrane; the sequence is VVAPKMLTDFFADKKAISFLGCVL. Cys97 and Cys189 are disulfide-bonded. The helical transmembrane segment at 100–120 threads the bilayer; it reads QQWFFGFFVAIECLLLASMAY. Over 121–133 the chain is Cytoplasmic; sequence DRYVAICNPLLYS. A helical transmembrane segment spans residues 134–154; it reads VAMSQRLCIQLVIGPYAVGFF. Residues 155–196 are Extracellular-facing; the sequence is NTMTHTTAAFRLPFCGSNIINHFFCDMSPILSLICADIRINK. Residues 197 to 217 form a helical membrane-spanning segment; that stretch reads LLVFIVAGAVLIVSSTTIIVS. At 218 to 237 the chain is on the cytoplasmic side; it reads YFHILIAILRIRSAEGRRKA. The chain crosses the membrane as a helical span at residues 238–258; sequence FSTCSSHVTAVSILYGTLFFI. Topologically, residues 259–271 are extracellular; sequence YVRPSAISSLDLN. A helical transmembrane segment spans residues 272 to 292; sequence KVVSVFYTAVIPMLNPLIYSL. Residues 293-314 lie on the Cytoplasmic side of the membrane; it reads RNKEVKSAMGRTVAKAKVFLKN.

It belongs to the G-protein coupled receptor 1 family.

Its subcellular location is the cell membrane. Its function is as follows. Potential odorant receptor. The protein is Olfactory receptor 5G9 of Mus musculus (Mouse).